The following is a 203-amino-acid chain: TATA-box-binding protein (203 aa).

Repeat copies occupy residues 25 to 101 (IENI…LKAF) and 116 to 192 (IQNI…ARKL).

The protein belongs to the TBP family.

General factor that plays a role in the activation of archaeal genes transcribed by RNA polymerase. Binds specifically to the TATA box promoter element which lies close to the position of transcription initiation. The sequence is that of TATA-box-binding protein (tbp) from Aeropyrum pernix (strain ATCC 700893 / DSM 11879 / JCM 9820 / NBRC 100138 / K1).